The sequence spans 528 residues: Beta-hexosaminidase subunit alpha (528 aa).

The N-terminal stretch at 1–22 is a signal peptide; it reads MAGCRLWVSLLLAAALACLATA. A propeptide spanning residues 23-88 is cleaved from the precursor; the sequence is LWPWPQYIQT…PRPSFSKKQQ (66 aa). Cys-58 and Cys-104 form a disulfide bridge. N-linked (GlcNAc...) asparagine glycosylation is found at Asn-115, Asn-157, and Asn-295. Cys-277 and Cys-328 are joined by a disulfide. Residue Glu-323 is the Proton donor of the active site. Residues 422–423 form a critical for hydrolysis GM2 gangliosides region; the sequence is NR. Asn-487 carries an N-linked (GlcNAc...) asparagine glycan. Residues Cys-504 and Cys-521 are joined by a disulfide bond.

Belongs to the glycosyl hydrolase 20 family. There are 3 beta-hexosaminidase isozymes: isozyme A (hexosaminidase A) is a heterodimer composed of one subunit alpha and one subunit beta (chain A and B); isozyme B (hexosaminidase B) is a homodimer of two beta subunits (two chains A and B); isozyme S (hexosaminidase S) is a homodimer of two alpha subunits. The composition of the dimer (isozyme A versus isozyme S) has a significant effect on the substrate specificity of the alpha subunit active site.

It localises to the lysosome. The enzyme catalyses Hydrolysis of terminal non-reducing N-acetyl-D-hexosamine residues in N-acetyl-beta-D-hexosaminides.. It catalyses the reaction N-acetyl-beta-D-galactosaminyl-(1-&gt;4)-beta-D-3-sulfogalactosyl-(1-&gt;4)-beta-D-glucosyl-(1&lt;-&gt;1')-ceramide + H2O = a beta-D-3-sulfogalactosyl-(1-&gt;4)-beta-D-glucosyl-(1&lt;-&gt;1')-ceramide + N-acetyl-beta-D-galactosamine. It carries out the reaction a ganglioside GM2 (d18:1(4E)) + H2O = a ganglioside GM3 (d18:1(4E)) + N-acetyl-beta-D-galactosamine. The catalysed reaction is a ganglioside GM2 + H2O = a ganglioside GM3 + N-acetyl-beta-D-galactosamine. The enzyme catalyses beta-D-GalNAc-(1-&gt;4)-alpha-L-IdoA-(1-&gt;3)-beta-D-GalNAc-4-sulfate-(1-&gt;4)-alpha-L-IdoA-(1-&gt;3)-D-GalNAc-4-sulfate + H2O = alpha-L-IdoA-(1-&gt;3)-beta-D-GalNAc-4-sulfate-(1-&gt;4)-alpha-L-IdoA-(1-&gt;3)-D-GalNAc-4-sulfate + N-acetyl-D-galactosamine. It catalyses the reaction N-acetyl-beta-D-6-sulfogalactosaminyl-(1-&gt;4)-alpha-L-iduronyl-(1-&gt;3)-N-acetyl-D-6-sulfogalactosamine + H2O = alpha-L-iduronyl-(1-&gt;3)-N-acetyl-D-6-sulfogalactosamine + N-acetyl-D-6-sulfogalactosamine. Addition of GM2A stimulates the hydrolysis of sulfated glycosphingolipid SM2 and the ganglioside GM2. Its function is as follows. Hydrolyzes the non-reducing end N-acetyl-D-hexosamine and/or sulfated N-acetyl-D-hexosamine of glycoconjugates, such as the oligosaccharide moieties from proteins and neutral glycolipids, or from certain mucopolysaccharides. The isozyme S is as active as the isozyme A on the anionic bis-sulfated glycans, the chondroitin-6-sulfate trisaccharide (C6S-3), and the dermatan sulfate pentasaccharide, and the sulfated glycosphingolipid SM2. The isozyme B does not hydrolyze each of these substrates, however hydrolyzes efficiently neutral oligosaccharide. Only the isozyme A is responsible for the degradation of GM2 gangliosides in the presence of GM2A. The sequence is that of Beta-hexosaminidase subunit alpha from Rattus norvegicus (Rat).